Here is a 141-residue protein sequence, read N- to C-terminus: Large ribosomal subunit protein uL11 (141 aa).

It belongs to the universal ribosomal protein uL11 family. As to quaternary structure, part of the ribosomal stalk of the 50S ribosomal subunit. Interacts with L10 and the large rRNA to form the base of the stalk. L10 forms an elongated spine to which L12 dimers bind in a sequential fashion forming a multimeric L10(L12)X complex. One or more lysine residues are methylated.

Functionally, forms part of the ribosomal stalk which helps the ribosome interact with GTP-bound translation factors. The sequence is that of Large ribosomal subunit protein uL11 from Synechococcus elongatus (strain ATCC 33912 / PCC 7942 / FACHB-805) (Anacystis nidulans R2).